We begin with the raw amino-acid sequence, 37 residues long: Cytochrome b6-f complex subunit 5 (37 aa).

A helical transmembrane segment spans residues 5 to 25; it reads LLSGIVLGLITVSALGLFVAA.

Belongs to the PetG family. The 4 large subunits of the cytochrome b6-f complex are cytochrome b6, subunit IV (17 kDa polypeptide, PetD), cytochrome f and the Rieske protein, while the 4 small subunits are PetG, PetL, PetM and PetN. The complex functions as a dimer.

It localises to the plastid. It is found in the chloroplast thylakoid membrane. In terms of biological role, component of the cytochrome b6-f complex, which mediates electron transfer between photosystem II (PSII) and photosystem I (PSI), cyclic electron flow around PSI, and state transitions. PetG is required for either the stability or assembly of the cytochrome b6-f complex. In Phaeodactylum tricornutum (strain CCAP 1055/1), this protein is Cytochrome b6-f complex subunit 5.